The primary structure comprises 232 residues: Enolase-phosphatase E1 (232 aa).

It belongs to the HAD-like hydrolase superfamily. MasA/MtnC family. In terms of assembly, monomer. The cofactor is Mg(2+).

It catalyses the reaction 5-methylsulfanyl-2,3-dioxopentyl phosphate + H2O = 1,2-dihydroxy-5-(methylsulfanyl)pent-1-en-3-one + phosphate. It functions in the pathway amino-acid biosynthesis; L-methionine biosynthesis via salvage pathway; L-methionine from S-methyl-5-thio-alpha-D-ribose 1-phosphate: step 3/6. The protein operates within amino-acid biosynthesis; L-methionine biosynthesis via salvage pathway; L-methionine from S-methyl-5-thio-alpha-D-ribose 1-phosphate: step 4/6. Bifunctional enzyme that catalyzes the enolization of 2,3-diketo-5-methylthiopentyl-1-phosphate (DK-MTP-1-P) into the intermediate 2-hydroxy-3-keto-5-methylthiopentenyl-1-phosphate (HK-MTPenyl-1-P), which is then dephosphorylated to form the acireductone 1,2-dihydroxy-3-keto-5-methylthiopentene (DHK-MTPene). This Sorangium cellulosum (strain So ce56) (Polyangium cellulosum (strain So ce56)) protein is Enolase-phosphatase E1.